The primary structure comprises 1079 residues: Eukaryotic translation initiation factor 5B (1079 aa).

Positions 1–478 are disordered; the sequence is MGKKGKKSGY…QAAPAESNVS (478 aa). Positions 22 to 38 are enriched in polar residues; the sequence is SGQNEYLDNTSQDSPQN. Residues 57 to 67 are compositionally biased toward basic residues; the sequence is SKKKKGKKNKG. Phosphoserine is present on residues serine 73, serine 77, and serine 82. Positions 105 to 114 are enriched in basic residues; it reads KKGKKGKKSK. Serine 127 is subject to Phosphoserine. The span at 160 to 169 shows a compositional bias: low complexity; it reads NNNESEAAAP. Basic and acidic residues predominate over residues 173-192; the sequence is PEVRVKTKKEKEREKKEREK. Over residues 193–204 the composition is skewed to basic residues; it reads LRKKQQQAKKKG. A compositionally biased stretch (polar residues) spans 207–233; it reads GEDTLASSEVSSEVDISTPAENDSSAK. The span at 253 to 293 shows a compositional bias: basic and acidic residues; the sequence is MLEEKRAREEEEQRIREEEARIAEEEKRLAEVEEARKEEAR. 2 stretches are compositionally biased toward low complexity: residues 321-334 and 361-376; these read QQAL…QMLE and RSGT…LESS. The residue at position 364 (threonine 364) is a Phosphothreonine. A compositionally biased stretch (basic and acidic residues) spans 385-408; the sequence is EPQKDSKDDSEKVEKETEVERKEE. Residues 409–431 show a composition bias toward acidic residues; sequence NEAEAEAVFDDWEAALEEPEVAE. Residues 436–466 show a composition bias toward basic and acidic residues; that stretch reads VTEKKETDIKSDAVEHSIKDKEDSKTDKVDD. The tr-type G domain maps to 482–700; the sequence is LRSPICCILG…LISLTQTRMS (219 aa). The interval 491–498 is G1; it reads GHVDTGKT. Residue 491–498 coordinates GTP; sequence GHVDTGKT. The G2 stretch occupies residues 516–520; that stretch reads GITQQ. Residues 555–558 are G3; it reads DTPG. Residues 609 to 612 form a G4 region; sequence NKVD. Residues 677–679 are G5; the sequence is SAQ.

Belongs to the TRAFAC class translation factor GTPase superfamily. Classic translation factor GTPase family. IF-2 subfamily. The cofactor is a monovalent cation.

It localises to the cytoplasm. The enzyme catalyses GTP + H2O = GDP + phosphate + H(+). Functionally, plays a role in translation initiation. Translational GTPase that catalyzes the joining of the 40S and 60S subunits to form the 80S initiation complex with the initiator methionine-tRNA in the P-site base paired to the start codon. GTP binding and hydrolysis induces conformational changes in the enzyme that renders it active for productive interactions with the ribosome. The release of the enzyme after formation of the initiation complex is a prerequisite to form elongation-competent ribosomes. This Schizosaccharomyces pombe (strain 972 / ATCC 24843) (Fission yeast) protein is Eukaryotic translation initiation factor 5B.